The chain runs to 363 residues: Chorismate synthase (363 aa).

The NADP(+) site is built by Arg48 and Arg54. FMN is bound by residues 125-127, 237-238, Gly277, 292-296, and Arg318; these read RSS, NA, and KPTSS.

It belongs to the chorismate synthase family. In terms of assembly, homotetramer. FMNH2 is required as a cofactor.

The enzyme catalyses 5-O-(1-carboxyvinyl)-3-phosphoshikimate = chorismate + phosphate. It functions in the pathway metabolic intermediate biosynthesis; chorismate biosynthesis; chorismate from D-erythrose 4-phosphate and phosphoenolpyruvate: step 7/7. Catalyzes the anti-1,4-elimination of the C-3 phosphate and the C-6 proR hydrogen from 5-enolpyruvylshikimate-3-phosphate (EPSP) to yield chorismate, which is the branch point compound that serves as the starting substrate for the three terminal pathways of aromatic amino acid biosynthesis. This reaction introduces a second double bond into the aromatic ring system. The protein is Chorismate synthase of Pseudomonas putida (strain ATCC 700007 / DSM 6899 / JCM 31910 / BCRC 17059 / LMG 24140 / F1).